Consider the following 370-residue polypeptide: Phosphate acyltransferase (370 aa).

The protein belongs to the PlsX family. Homodimer. Probably interacts with PlsY.

The protein resides in the cytoplasm. It carries out the reaction a fatty acyl-[ACP] + phosphate = an acyl phosphate + holo-[ACP]. The protein operates within lipid metabolism; phospholipid metabolism. In terms of biological role, catalyzes the reversible formation of acyl-phosphate (acyl-PO(4)) from acyl-[acyl-carrier-protein] (acyl-ACP). This enzyme utilizes acyl-ACP as fatty acyl donor, but not acyl-CoA. This is Phosphate acyltransferase from Polaromonas naphthalenivorans (strain CJ2).